A 550-amino-acid chain; its full sequence is Eukaryotic translation initiation factor 3 subunit D (550 aa).

The interval 288–302 (DFDLLTVSETANEPP) is RNA gate. Residues 526 to 550 (PDGTFSSDEEEDDDDEDEEVEEEES) are disordered. Over residues 532–550 (SDEEEDDDDEDEEVEEEES) the composition is skewed to acidic residues.

It belongs to the eIF-3 subunit D family. In terms of assembly, component of the eukaryotic translation initiation factor 3 (eIF-3) complex, which is composed of 13 subunits: eif3a, eif3b, eif3c, eif3d, eif3e, eif3f, eif3g, eif3h, eif3i, eif3j, eif3k, eif3l and eif3m.

It localises to the cytoplasm. In terms of biological role, mRNA cap-binding component of the eukaryotic translation initiation factor 3 (eIF-3) complex, which is involved in protein synthesis of a specialized repertoire of mRNAs and, together with other initiation factors, stimulates binding of mRNA and methionyl-tRNAi to the 40S ribosome. The eIF-3 complex specifically targets and initiates translation of a subset of mRNAs involved in cell proliferation. In the eIF-3 complex, eif3d specifically recognizes and binds the 7-methylguanosine cap of a subset of mRNAs. This is Eukaryotic translation initiation factor 3 subunit D (eif3d) from Xenopus laevis (African clawed frog).